Here is a 451-residue protein sequence, read N- to C-terminus: MTTLPAPTISTTAELRALLRLAGPVVVSQFAANALALIATAVIGRLGERELAAAAYANAAYYLVFIMVVGVMLSVAPRVAQAHGAGDARGVARALGGGLRLALLLSAVMLPLMWALSFVLPNFAPAGVSRDLVAAYLRVYSLGMLPNLAFIALRGTLEGTGKPGAVTGVALTGVVWALLVAPALAFGWGPLPRLGLAGAAGASASAAWIMAALLWPLARRRVAYAGPLGPLGDEVRALFRLGWPIGLTLGAEGGMFSVTTLLMARFGPEVLAAHNVTMQTITAFFMVPLGIASATGVRVGTEAGAGRLAQARRAGLVGLGLSSAVMLTFAVIELAAPRTVFSVFVNVNDPANAGLIAAATGFLSIAALFQLMDGLQVTANGALRGLQDTRVPLLVSLVAYWVVGLGLGSVLSSVAGLGARGLWFGLTAGLTLAGLSLVGRFLYRTRAGRAA.

A run of 12 helical transmembrane segments spans residues 23 to 43 (GPVVVSQFAANALALIATAVI), 53 to 73 (AAAYANAAYYLVFIMVVGVML), 101 to 121 (LALLLSAVMLPLMWALSFVLP), 132 to 152 (LVAAYLRVYSLGMLPNLAFIA), 169 to 189 (VALTGVVWALLVAPALAFGWG), 194 to 214 (LGLAGAAGASASAAWIMAALL), 243 to 263 (WPIGLTLGAEGGMFSVTTLLM), 277 to 297 (TMQTITAFFMVPLGIASATGV), 316 to 336 (LVGLGLSSAVMLTFAVIELAA), 355 to 375 (LIAAATGFLSIAALFQLMDGL), 391 to 411 (VPLLVSLVAYWVVGLGLGSVL), and 422 to 442 (LWFGLTAGLTLAGLSLVGRFL).

This sequence belongs to the multi antimicrobial extrusion (MATE) (TC 2.A.66.1) family.

The protein localises to the cell membrane. Functionally, multidrug efflux pump. The chain is Probable multidrug resistance protein NorM (norM) from Deinococcus radiodurans (strain ATCC 13939 / DSM 20539 / JCM 16871 / CCUG 27074 / LMG 4051 / NBRC 15346 / NCIMB 9279 / VKM B-1422 / R1).